The chain runs to 907 residues: Protein translocase subunit SecA (907 aa).

ATP contacts are provided by residues glutamine 87, 105 to 109 (GEGKT), and aspartate 513. Positions 841–853 (EAQRRAQAEEAAR) are enriched in basic and acidic residues. The segment at 841–907 (EAQRRAQAEE…KYKQCHGQIN (67 aa)) is disordered. Low complexity predominate over residues 854–865 (RAQAQHASAQSQ). The span at 872–887 (EGHHQPVVRDERKVGR) shows a compositional bias: basic and acidic residues. Zn(2+) contacts are provided by cysteine 891, cysteine 893, cysteine 902, and histidine 903.

Belongs to the SecA family. As to quaternary structure, monomer and homodimer. Part of the essential Sec protein translocation apparatus which comprises SecA, SecYEG and auxiliary proteins SecDF-YajC and YidC. It depends on Zn(2+) as a cofactor.

The protein localises to the cell inner membrane. Its subcellular location is the cytoplasm. The catalysed reaction is ATP + H2O + cellular proteinSide 1 = ADP + phosphate + cellular proteinSide 2.. Its function is as follows. Part of the Sec protein translocase complex. Interacts with the SecYEG preprotein conducting channel. Has a central role in coupling the hydrolysis of ATP to the transfer of proteins into and across the cell membrane, serving both as a receptor for the preprotein-SecB complex and as an ATP-driven molecular motor driving the stepwise translocation of polypeptide chains across the membrane. The polypeptide is Protein translocase subunit SecA (Vibrio vulnificus (strain CMCP6)).